Consider the following 222-residue polypeptide: GTP cyclohydrolase 1 (222 aa).

Zn(2+) contacts are provided by cysteine 111, histidine 114, and cysteine 182.

Belongs to the GTP cyclohydrolase I family. As to quaternary structure, homomer.

The catalysed reaction is GTP + H2O = 7,8-dihydroneopterin 3'-triphosphate + formate + H(+). It participates in cofactor biosynthesis; 7,8-dihydroneopterin triphosphate biosynthesis; 7,8-dihydroneopterin triphosphate from GTP: step 1/1. The polypeptide is GTP cyclohydrolase 1 (Klebsiella pneumoniae (strain 342)).